A 153-amino-acid chain; its full sequence is MSNTKERTFICIKPDAVQRGLIGKIFERFEQRGYKLVAMKMLKATKSHLEIHYQELQGKPFFNDLVGYMSSGPVIAMVWEGLDVVKQARQMLGATNPLNSMPGTIRGDFSIQTGRNIVHGSDSLPSAEREITHWFKPEELCEWSSATATWVYE.

Residues K13, F61, R89, T95, R106, and N116 each contribute to the ATP site. Catalysis depends on H119, which acts as the Pros-phosphohistidine intermediate.

The protein belongs to the NDK family. As to quaternary structure, homohexamer. Requires Mg(2+) as cofactor.

It is found in the cytoplasm. The enzyme catalyses a 2'-deoxyribonucleoside 5'-diphosphate + ATP = a 2'-deoxyribonucleoside 5'-triphosphate + ADP. It carries out the reaction a ribonucleoside 5'-diphosphate + ATP = a ribonucleoside 5'-triphosphate + ADP. In terms of biological role, major role in the synthesis of nucleoside triphosphates other than ATP. The ATP gamma phosphate is transferred to the NDP beta phosphate via a ping-pong mechanism, using a phosphorylated active-site intermediate. The chain is Nucleoside diphosphate kinase (NDK) from Brugia malayi (Filarial nematode worm).